The sequence spans 199 residues: HTH-type transcriptional regulator BetI (199 aa).

The HTH tetR-type domain occupies 8 to 68; that stretch reads EIRKPQLVKA…ETMREILRQL (61 aa). The H-T-H motif DNA-binding region spans 31–50; sequence SISLISKEAGVSTGIINHYF.

Its pathway is amine and polyamine biosynthesis; betaine biosynthesis via choline pathway [regulation]. Repressor involved in the biosynthesis of the osmoprotectant glycine betaine. It represses transcription of the choline transporter BetT and the genes of BetAB involved in the synthesis of glycine betaine. This Vibrio campbellii (strain ATCC BAA-1116) protein is HTH-type transcriptional regulator BetI.